A 473-amino-acid polypeptide reads, in one-letter code: MKVNEENNKPTKTHVLIFPFPAQGHMIPLLDFTHRLALRGGAALKITVLVTPKNLPFLSPLLSAVVNIEPLILPFPSHPSIPSGVENVQDLPPSGFPLMIHALGNLHAPLISWITSHPSPPVAIVSDFFLGWTKNLGIPRFDFSPSAAITCCILNTLWIEMPTKINEDDDNEILHFPKIPNCPKYRFDQISSLYRSYVHGDPAWEFIRDSFRDNVASWGLVVNSFTAMEGVYLEHLKREMGHDRVWAVGPIIPLSGDNRGGPTSVSVDHVMSWLDAREDNHVVYVCFGSQVVLTKEQTLALASGLEKSGVHFIWAVKEPVEKDSTRGNILDGFDDRVAGRGLVIRGWAPQVAVLRHRAVGAFLTHCGWNSVVEAVVAGVLMLTWPMRADQYTDASLVVDELKVGVRACEGPDTVPDPDELARVFADSVTGNQTERIKAVELRKAALDAIQERGSSVNDLDGFIQHVVSLGLNK.

Catalysis depends on His25, which acts as the Proton acceptor. His25 is a binding site for an anthocyanidin. Residue Asp127 is the Charge relay of the active site. Ala348, Gln350, His365, Trp368, Asn369, Ser370, and Glu373 together coordinate UDP-alpha-D-glucose. An an anthocyanidin-binding site is contributed by Ala388. UDP-alpha-D-glucose contacts are provided by Asp389 and Gln390.

It belongs to the UDP-glycosyltransferase family.

It carries out the reaction a flavonol + UDP-alpha-D-glucose = a flavonol 3-O-beta-D-glucoside + UDP + H(+). It catalyses the reaction a 7-O-hydroxy-flavonol + UDP-alpha-D-glucose = a flavonol 7-O-beta-D-glucoside + UDP + H(+). Functionally, possesses quercetin 3-O-glucosyltransferase, 7-O-glucosyltransferase and 4'-O-glucosyltransferase activities in vitro. Also active in vitro on benzoates and benzoate derivatives. The sequence is that of Flavonol 3-O-glucosyltransferase UGT89B1 from Arabidopsis thaliana (Mouse-ear cress).